The primary structure comprises 858 residues: MPALAIMGLSLAAFLELGMGASLCLSQQFKAQGDYILGGLFPLGSTEEATLNQRTQPNSIPCNRFSPLGLFLAMAMKMAVEEINNGSALLPGLRLGYDLFDTCSEPVVTMKSSLMFLAKVGSQSIAAYCNYTQYQPRVLAVIGPHSSELALITGKFFSFFLMPQVSYSASMDRLSDRETFPSFFRTVPSDRVQLQAVVTLLQNFSWNWVAALGSDDDYGREGLSIFSSLANARGICIAHEGLVPQHDTSGQQLGKVLDVLRQVNQSKVQVVVLFASARAVYSLFSYSIHHGLSPKVWVASESWLTSDLVMTLPNIARVGTVLGFLQRGALLPEFSHYVETHLALAADPAFCASLNAELDLEEHVMGQRCPRCDDIMLQNLSSGLLQNLSAGQLHHQIFATYAAVYSVAQALHNTLQCNVSHCHVSEHVLPWQLLENMYNMSFHARDLTLQFDAEGNVDMEYDLKMWVWQSPTPVLHTVGTFNGTLQLQQSKMYWPGNQVPVSQCSRQCKDGQVRRVKGFHSCCYDCVDCKAGSYRKHPDDFTCTPCNQDQWSPEKSTACLPRRPKFLAWGEPVVLSLLLLLCLVLGLALAALGLSVHHWDSPLVQASGGSQFCFGLICLGLFCLSVLLFPGRPSSASCLAQQPMAHLPLTGCLSTLFLQAAETFVESELPLSWANWLCSYLRGLWAWLVVLLATFVEAALCAWYLIAFPPEVVTDWSVLPTEVLEHCHVRSWVSLGLVHITNAMLAFLCFLGTFLVQSQPGRYNRARGLTFAMLAYFITWVSFVPLLANVQVAYQPAVQMGAILVCALGILVTFHLPKCYVLLWLPKLNTQEFFLGRNAKKAADENSGGGEAAQGHNE.

The first 20 residues, 1–20 (MPALAIMGLSLAAFLELGMG), serve as a signal peptide directing secretion. The Extracellular segment spans residues 21 to 572 (ASLCLSQQFK…RPKFLAWGEP (552 aa)). A glycan (N-linked (GlcNAc...) asparagine; when associated with variant T-60) is linked at Asn-58. 9 N-linked (GlcNAc...) asparagine glycosylation sites follow: Asn-85, Asn-130, Asn-203, Asn-264, Asn-379, Asn-387, Asn-418, Asn-439, and Asn-482. Residues 573-593 (VVLSLLLLLCLVLGLALAALG) form a helical membrane-spanning segment. The Cytoplasmic portion of the chain corresponds to 594–610 (LSVHHWDSPLVQASGGS). The helical transmembrane segment at 611–631 (QFCFGLICLGLFCLSVLLFPG) threads the bilayer. Residues 632 to 644 (RPSSASCLAQQPM) lie on the Extracellular side of the membrane. The helical transmembrane segment at 645–665 (AHLPLTGCLSTLFLQAAETFV) threads the bilayer. At 666–687 (ESELPLSWANWLCSYLRGLWAW) the chain is on the cytoplasmic side. A helical membrane pass occupies residues 688–708 (LVVLLATFVEAALCAWYLIAF). The Extracellular portion of the chain corresponds to 709-735 (PPEVVTDWSVLPTEVLEHCHVRSWVSL). The chain crosses the membrane as a helical span at residues 736–756 (GLVHITNAMLAFLCFLGTFLV). At 757–767 (QSQPGRYNRAR) the chain is on the cytoplasmic side. Residues 768 to 788 (GLTFAMLAYFITWVSFVPLLA) form a helical membrane-spanning segment. Over 789–796 (NVQVAYQP) the chain is Extracellular. A helical transmembrane segment spans residues 797-817 (AVQMGAILVCALGILVTFHLP). The Cytoplasmic segment spans residues 818-858 (KCYVLLWLPKLNTQEFFLGRNAKKAADENSGGGEAAQGHNE).

The protein belongs to the G-protein coupled receptor 3 family. TAS1R subfamily. As to quaternary structure, forms homodimers or heterodimers with TAS1R1 and TAS1R2. Post-translationally, the Thr-60 variant is predicted to introduce a novel N-linked glycosylation site at Asn-58. The addition of even a short carbohydrate group at Asn-58 is predicted to disrupt one of the contact surfaces required for stability of a dimer. Therefore a Thr-60 variant N-glycosylated at Asn-58 is predicted to be precluded from forming homodimers or heterodimers. Expressed in circumvallate, foliate and fungiform taste papillae as well as in taste buds on the palate. Also expressed in testis. Not expressed in brain, heart, kidney, liver or spleen. The topographic distribution in various taste papillae is different from those of other T1R members.

The protein localises to the cell membrane. Functionally, putative taste receptor. TAS1R1/TAS1R3 responds to the umami taste stimulus (the taste of monosodium glutamate) and also to most of the 20 standard L-amino acids, but not to their D-enantiomers or other compounds. TAS1R2/TAS1R3 recognizes diverse natural and synthetic sweeteners. TAS1R3 is essential for the recognition and response to the disaccharide trehalose. Sequence differences within and between species can significantly influence the selectivity and specificity of taste responses. This is Taste receptor type 1 member 3 (Tas1r3) from Mus musculus (Mouse).